A 133-amino-acid polypeptide reads, in one-letter code: Small ribosomal subunit protein uS8 (133 aa).

Belongs to the universal ribosomal protein uS8 family. Part of the 30S ribosomal subunit. Contacts proteins S5 and S12.

In terms of biological role, one of the primary rRNA binding proteins, it binds directly to 16S rRNA central domain where it helps coordinate assembly of the platform of the 30S subunit. The polypeptide is Small ribosomal subunit protein uS8 (Lachnoclostridium phytofermentans (strain ATCC 700394 / DSM 18823 / ISDg) (Clostridium phytofermentans)).